The primary structure comprises 181 residues: Akirin-2 (181 aa).

The tract at residues 18–48 (SPAASPKRRRCAPLSPSGPSPQKYLRLEPSP) is disordered. The Nuclear localization signal signature appears at 23 to 28 (PKRRRC). Positions 178–181 (SYVS) match the SYVS motif motif.

It belongs to the akirin family. Homodimer. Interacts with actl6a/baf53a. Interacts with gmnn.

It is found in the nucleus. Molecular adapter that acts as a bridge between a variety of multiprotein complexes, and which is involved in embryonic development, immunity, myogenesis and brain development. Plays a key role in nuclear protein degradation by promoting import of proteasomes into the nucleus: acts by bridging fully assembled 20S proteasomes with nuclear import receptor ipo9. Involved in both neural precursor maintenance and terminal neural differentiation: bridges gmnn and actl6a/baf53a in neural progenitor cells, antagonizing the activity of gmnn, thereby suppressing sox2 expression. Also required for proper activation of neurod1 and neuronal differentiation. Involved in myogenesis: required for skeletal muscle formation and skeletal development, possibly by regulating expression of muscle differentiation factors. The protein is Akirin-2 of Xenopus laevis (African clawed frog).